A 66-amino-acid polypeptide reads, in one-letter code: Phylloseptin-Az2 (66 aa).

The N-terminal stretch at 1-22 (MAFLKKSLFLVLFLGLVSLSIC) is a signal peptide. Positions 23-44 (EEEKRETEEKENEQEDDDKSEE) are excised as a propeptide. The tract at residues 24–45 (EEKRETEEKENEQEDDDKSEEK) is disordered. A compositionally biased stretch (acidic residues) spans 31–41 (EKENEQEDDDK). Phe-65 is subject to Phenylalanine amide.

Expressed by the skin glands.

The protein localises to the secreted. In terms of biological role, has antibacterial activity against the Gram-negative bacteria E.coli ATCC 11775 (MIC=7.2 uM), and the Gram-positive bacteria S.aureus ATCC 12600 (MIC=3.6 uM) and M.luteus ATCC 49732 (MIC=1.8 uM). Does not inhibit the growth of the fungus C.albicans. In Pithecopus azureus (Orange-legged monkey tree frog), this protein is Phylloseptin-Az2.